Reading from the N-terminus, the 312-residue chain is Aspartate carbamoyltransferase catalytic subunit (312 aa).

2 residues coordinate carbamoyl phosphate: Arg58 and Thr59. L-aspartate is bound at residue Lys86. Residues Arg108, His136, and Gln139 each coordinate carbamoyl phosphate. Residues Arg169 and Arg223 each coordinate L-aspartate. 2 residues coordinate carbamoyl phosphate: Gly264 and Pro265.

The protein belongs to the aspartate/ornithine carbamoyltransferase superfamily. ATCase family. Heterododecamer (2C3:3R2) of six catalytic PyrB chains organized as two trimers (C3), and six regulatory PyrI chains organized as three dimers (R2).

The catalysed reaction is carbamoyl phosphate + L-aspartate = N-carbamoyl-L-aspartate + phosphate + H(+). It functions in the pathway pyrimidine metabolism; UMP biosynthesis via de novo pathway; (S)-dihydroorotate from bicarbonate: step 2/3. Its function is as follows. Catalyzes the condensation of carbamoyl phosphate and aspartate to form carbamoyl aspartate and inorganic phosphate, the committed step in the de novo pyrimidine nucleotide biosynthesis pathway. This is Aspartate carbamoyltransferase catalytic subunit from Endomicrobium trichonymphae.